The primary structure comprises 746 residues: Alpha-1,4-glucan:maltose-1-phosphate maltosyltransferase (746 aa).

The segment at 1–43 (MAAVQHRATTRTSNTDNSTTKTKSKATSARKSPATKRKRVSAE) is disordered. The span at 10–32 (TRTSNTDNSTTKTKSKATSARKS) shows a compositional bias: low complexity. Positions 343, 403, and 438 each coordinate alpha-maltose 1-phosphate. The active-site Nucleophile is aspartate 473. Asparagine 474 serves as a coordination point for alpha-maltose 1-phosphate. Catalysis depends on glutamate 502, which acts as the Proton donor. 612 to 613 (KY) contributes to the alpha-maltose 1-phosphate binding site.

This sequence belongs to the glycosyl hydrolase 13 family. GlgE subfamily. Homodimer.

The enzyme catalyses alpha-maltose 1-phosphate + [(1-&gt;4)-alpha-D-glucosyl](n) = [(1-&gt;4)-alpha-D-glucosyl](n+2) + phosphate. Its function is as follows. Maltosyltransferase that uses maltose 1-phosphate (M1P) as the sugar donor to elongate linear or branched alpha-(1-&gt;4)-glucans. Is involved in a branched alpha-glucan biosynthetic pathway from trehalose, together with TreS, Mak and GlgB. This Bifidobacterium longum (strain NCC 2705) protein is Alpha-1,4-glucan:maltose-1-phosphate maltosyltransferase.